A 295-amino-acid polypeptide reads, in one-letter code: Carbapenem-hydrolyzing beta-lactamase transcriptional activator (295 aa).

Residues 5 to 62 enclose the HTH lysR-type domain; that stretch reads LPLNALRAFEASARYLNFTKAGLELHVSQAAVSQQVRTLEQMLGVALFTRVPRGLQLT. A DNA-binding region (H-T-H motif) is located at residues 22-41; sequence FTKAGLELHVSQAAVSQQVR.

The protein belongs to the LysR transcriptional regulatory family.

In terms of biological role, this protein is a positive regulator of gene expression of carbapenem-hydrolyzing beta-lactamase (NmcA). This Enterobacter cloacae protein is Carbapenem-hydrolyzing beta-lactamase transcriptional activator (nmcR).